The chain runs to 704 residues: Myb-related protein B (704 aa).

3 HTH myb-type domains span residues 26–77 (RDNR…LRVL), 78–133 (NPDL…NPEV), and 134–184 (KKSC…KRKV). Residues 54-77 (WKFLASHFPNRTDQQCQYRWLRVL) constitute a DNA-binding region (H-T-H motif). Lysine 104 participates in a covalent cross-link: Glycyl lysine isopeptide (Lys-Gly) (interchain with G-Cter in SUMO2). 2 consecutive DNA-binding regions (H-T-H motif) follow at residues 106 to 129 (WTLI…HNHL) and 157 to 180 (WAEI…NSTI). A Glycyl lysine isopeptide (Lys-Gly) (interchain with G-Cter in SUMO2) cross-link involves residue lysine 197. Position 267 is a phosphothreonine (threonine 267). Residue lysine 275 forms a Glycyl lysine isopeptide (Lys-Gly) (interchain with G-Cter in SUMO2) linkage. Phosphoserine is present on serine 282. Residues 325–412 (LSKFDLPEEP…GSGIGTPPSV (88 aa)) form a disordered region. Over residues 339-366 (SVVSSPVQPQTSQQQQEEALQSSQQAAT) the composition is skewed to low complexity. At serine 396 the chain carries Phosphoserine. Lysine 414 is covalently cross-linked (Glycyl lysine isopeptide (Lys-Gly) (interchain with G-Cter in SUMO2)). A phosphothreonine; by CDK2 mark is found at threonine 443 and threonine 447. Residues lysine 450 and lysine 485 each participate in a glycyl lysine isopeptide (Lys-Gly) (interchain with G-Cter in SUMO2) cross-link. Threonine 490 and threonine 497 each carry phosphothreonine; by CDK2. Residues lysine 502 and lysine 513 each participate in a glycyl lysine isopeptide (Lys-Gly) (interchain with G-Cter in SUMO2) cross-link. Threonine 524 is modified (phosphothreonine; by CDK2). Residues lysine 527, lysine 537, and lysine 550 each participate in a glycyl lysine isopeptide (Lys-Gly) (interchain with G-Cter in SUMO2) cross-link. At serine 581 the chain carries Phosphoserine; by CDK2. Glycyl lysine isopeptide (Lys-Gly) (interchain with G-Cter in SUMO2) cross-links involve residues lysine 588 and lysine 600. The disordered stretch occupies residues 603–626 (SSTMPKPLSLPTSVTPSSCGFTSP). The span at 607–620 (PKPLSLPTSVTPSS) shows a compositional bias: low complexity. Residues lysine 629, lysine 643, and lysine 652 each participate in a glycyl lysine isopeptide (Lys-Gly) (interchain with G-Cter in SUMO2) cross-link.

As to quaternary structure, component of the DREAM complex (also named LINC complex) at least composed of E2F4, E2F5, LIN9, LIN37, LIN52, LIN54, MYBL1, MYBL2, RBL1, RBL2, RBBP4, TFDP1 and TFDP2. The complex exists in quiescent cells where it represses cell cycle-dependent genes. It dissociates in S phase when LIN9, LIN37, LIN52 and LIN54 form a subcomplex that binds to MYBL2. Interacts with CCNF (via the Cyclin N-terminal domain). In terms of processing, phosphorylated by cyclin A/CDK2 during S-phase. Phosphorylation at Thr-524 is probably involved in transcriptional activity.

It localises to the nucleus. Functionally, transcription factor involved in the regulation of cell survival, proliferation, and differentiation. Transactivates the expression of the CLU gene. The protein is Myb-related protein B (Mybl2) of Mus musculus (Mouse).